A 290-amino-acid polypeptide reads, in one-letter code: Bifunctional protein FolD (290 aa).

NADP(+)-binding positions include 165 to 167 (GRG), S194, and I235.

Belongs to the tetrahydrofolate dehydrogenase/cyclohydrolase family. In terms of assembly, homodimer.

The enzyme catalyses (6R)-5,10-methylene-5,6,7,8-tetrahydrofolate + NADP(+) = (6R)-5,10-methenyltetrahydrofolate + NADPH. It carries out the reaction (6R)-5,10-methenyltetrahydrofolate + H2O = (6R)-10-formyltetrahydrofolate + H(+). The protein operates within one-carbon metabolism; tetrahydrofolate interconversion. Its function is as follows. Catalyzes the oxidation of 5,10-methylenetetrahydrofolate to 5,10-methenyltetrahydrofolate and then the hydrolysis of 5,10-methenyltetrahydrofolate to 10-formyltetrahydrofolate. This Syntrophotalea carbinolica (strain DSM 2380 / NBRC 103641 / GraBd1) (Pelobacter carbinolicus) protein is Bifunctional protein FolD.